The chain runs to 143 residues: Transcriptional regulator MraZ (143 aa).

SpoVT-AbrB domains lie at 5-47 and 76-119; these read EYQH…PKEE and AGEC…SRER.

The protein belongs to the MraZ family. In terms of assembly, forms oligomers.

Its subcellular location is the cytoplasm. It localises to the nucleoid. The protein is Transcriptional regulator MraZ of Heliobacterium modesticaldum (strain ATCC 51547 / Ice1).